A 472-amino-acid chain; its full sequence is Uronate isomerase (472 aa).

This sequence belongs to the metallo-dependent hydrolases superfamily. Uronate isomerase family.

The catalysed reaction is D-glucuronate = D-fructuronate. The enzyme catalyses aldehydo-D-galacturonate = keto-D-tagaturonate. The protein operates within carbohydrate metabolism; pentose and glucuronate interconversion. In Shouchella clausii (strain KSM-K16) (Alkalihalobacillus clausii), this protein is Uronate isomerase.